Here is a 390-residue protein sequence, read N- to C-terminus: tRNA-specific 2-thiouridylase MnmA (390 aa).

ATP-binding positions include 29–36 (GLSGGVDS) and Leu55. Catalysis depends on Cys116, which acts as the Nucleophile. Cys116 and Cys225 are disulfide-bonded. Position 141 (Gly141) interacts with ATP. Positions 175-177 (KDQ) are interaction with tRNA. Cys225 functions as the Cysteine persulfide intermediate in the catalytic mechanism. The tract at residues 330–331 (RY) is interaction with tRNA.

It belongs to the MnmA/TRMU family.

Its subcellular location is the cytoplasm. The enzyme catalyses S-sulfanyl-L-cysteinyl-[protein] + uridine(34) in tRNA + AH2 + ATP = 2-thiouridine(34) in tRNA + L-cysteinyl-[protein] + A + AMP + diphosphate + H(+). Functionally, catalyzes the 2-thiolation of uridine at the wobble position (U34) of tRNA, leading to the formation of s(2)U34. The polypeptide is tRNA-specific 2-thiouridylase MnmA (Prochlorococcus marinus (strain MIT 9515)).